The primary structure comprises 98 residues: Defensin-B (98 aa).

The signal sequence occupies residues 1 to 20 (MKSITVICFLALCTVAITSA). A propeptide spanning residues 21–58 (YPQEPVLADEARPFANSLFDELPEETYQAAVENFRLKR) is cleaved from the precursor. 3 disulfide bridges follow: C61/C88, C74/C94, and C78/C96.

This sequence belongs to the invertebrate defensin family. Type 1 subfamily.

The protein localises to the secreted. Antibacterial peptide mostly active against Gram-positive bacteria. This is Defensin-B (DEFB) from Aedes aegypti (Yellowfever mosquito).